We begin with the raw amino-acid sequence, 493 residues long: V-type proton ATPase subunit B (493 aa).

This sequence belongs to the ATPase alpha/beta chains family. As to quaternary structure, V-ATPase is a heteromultimeric enzyme composed of a peripheral catalytic V1 complex (main components: subunits A, B, C, D, E, and F) attached to an integral membrane V0 proton pore complex (main component: the proteolipid protein).

It localises to the cytoplasmic vesicle membrane. The protein localises to the endosome membrane. The protein resides in the contractile vacuole membrane. Functionally, vacuolar ATPase is responsible for acidifying a variety of intracellular compartments in eukaryotic cells. The B subunit is non-catalytic but combines with other subunits to form the catalytic complex. V-ATPase is responsible for energizing electrophoretic K(+)/2H(+) antiport by generating a transmembrane voltage of more than 200 mV. The protein is V-type proton ATPase subunit B (vatB) of Dictyostelium discoideum (Social amoeba).